The primary structure comprises 138 residues: Small ribosomal subunit protein uS9c (138 aa).

It belongs to the universal ribosomal protein uS9 family.

It localises to the plastid. Its subcellular location is the chloroplast. This chain is Small ribosomal subunit protein uS9c (rps9), found in Phaeodactylum tricornutum (strain CCAP 1055/1).